A 426-amino-acid chain; its full sequence is F-box protein At2g15640 (426 aa).

Residues 1–48 (MNPSTITNDLTVEILSRLPAKSVARFHCVSKQWGSIFGSPYFKELFLT) form the F-box domain.

In Arabidopsis thaliana (Mouse-ear cress), this protein is F-box protein At2g15640.